The sequence spans 339 residues: Heat-inducible transcription repressor HrcA (339 aa).

The protein belongs to the HrcA family.

Negative regulator of class I heat shock genes (grpE-dnaK-dnaJ and groELS operons). Prevents heat-shock induction of these operons. This is Heat-inducible transcription repressor HrcA from Frankia casuarinae (strain DSM 45818 / CECT 9043 / HFP020203 / CcI3).